The chain runs to 375 residues: Succinyl-diaminopimelate desuccinylase (375 aa).

His-66 serves as a coordination point for Zn(2+). Residue Asp-68 is part of the active site. Position 99 (Asp-99) interacts with Zn(2+). Residue Glu-133 is the Proton acceptor of the active site. Zn(2+) contacts are provided by Glu-134, Glu-162, and His-348.

Belongs to the peptidase M20A family. DapE subfamily. In terms of assembly, homodimer. The cofactor is Zn(2+). It depends on Co(2+) as a cofactor.

The catalysed reaction is N-succinyl-(2S,6S)-2,6-diaminopimelate + H2O = (2S,6S)-2,6-diaminopimelate + succinate. It functions in the pathway amino-acid biosynthesis; L-lysine biosynthesis via DAP pathway; LL-2,6-diaminopimelate from (S)-tetrahydrodipicolinate (succinylase route): step 3/3. Its function is as follows. Catalyzes the hydrolysis of N-succinyl-L,L-diaminopimelic acid (SDAP), forming succinate and LL-2,6-diaminopimelate (DAP), an intermediate involved in the bacterial biosynthesis of lysine and meso-diaminopimelic acid, an essential component of bacterial cell walls. This is Succinyl-diaminopimelate desuccinylase from Pectobacterium atrosepticum (strain SCRI 1043 / ATCC BAA-672) (Erwinia carotovora subsp. atroseptica).